The chain runs to 1238 residues: uncharacterized protein (1238 aa).

Disordered regions lie at residues 1-38 (MSSKRRNKNNKNNNKNNNKNNDNNNNIEQQDDIEDISS), 122-156 (SSTPISQLSPFKTPSPPSSSSSSSQSPLRKPRPSF), 229-439 (PKNN…KNKE), 660-1016 (KNKL…TGAA), 1051-1083 (EEEDDEEEKEQQNNNNNINSNSKNNNVNNKLNS), and 1098-1191 (KKSG…NASR). 3 stretches are compositionally biased toward low complexity: residues 10 to 26 (NKNNNKNNNKNNDNNNN), 129 to 149 (LSPFKTPSPPSSSSSSSQSPL), and 234 to 276 (QIDS…TQSQ). Over residues 317–343 (ELQNQTQINKSKQDLTNISQKINITTS) the composition is skewed to polar residues. Basic and acidic residues predominate over residues 344–361 (QHDKDDLGEYRMSEKGGG). Acidic residues predominate over residues 362-372 (DDGDDDDDYDN). Positions 383–394 (TNKKQQQQHHHK) are enriched in basic residues. The segment covering 395 to 416 (GKEESQSEYYEKEKEKEKEDIA) has biased composition (basic and acidic residues). 3 stretches are compositionally biased toward low complexity: residues 417–435 (TTRATTTTKSTDNSNNNIN), 678–691 (QQQQQQKQQQQQQE), and 712–792 (QPSQ…QEKQ). Positions 793–805 (QSQEKHQSQEKHQ) are enriched in basic and acidic residues. 2 stretches are compositionally biased toward low complexity: residues 806-859 (SQQS…SQQK) and 882-906 (SQSQSDLSQQFLSQSQSQSQSQSQR). The span at 916–927 (ENQDSENLDDTV) shows a compositional bias: acidic residues. Polar residues predominate over residues 929-944 (MNYNQIPSTLDHSTLQ). Basic and acidic residues predominate over residues 966 to 975 (EIERRRRELA). Over residues 976-990 (GEDSDEEFEILDEDQ) the composition is skewed to acidic residues. Composition is skewed to low complexity over residues 1062–1083 (QNNNNNINSNSKNNNVNNKLNS) and 1108–1121 (SSSSTNFYSSNKKN). Polar residues predominate over residues 1123–1133 (PQPTKSVNKPR). Positions 1142 to 1181 (SQNRQKQSEQQQQQPQQQPQLPQQQQQQQQQQQLRQQQNE) are enriched in low complexity. Positions 1182–1191 (NTISSLNASR) are enriched in polar residues.

This is an uncharacterized protein from Dictyostelium discoideum (Social amoeba).